A 600-amino-acid chain; its full sequence is Glutamine--fructose-6-phosphate aminotransferase [isomerizing] (600 aa).

C2 (nucleophile; for GATase activity) is an active-site residue. One can recognise a Glutamine amidotransferase type-2 domain in the interval 2-217 (CGIVGFIGEQ…DKEIVIVMKE (216 aa)). SIS domains follow at residues 283–422 (IRNA…AKGE) and 452–590 (LAKQ…VDKP). K595 functions as the For Fru-6P isomerization activity in the catalytic mechanism.

Homodimer.

It is found in the cytoplasm. The enzyme catalyses D-fructose 6-phosphate + L-glutamine = D-glucosamine 6-phosphate + L-glutamate. Catalyzes the first step in hexosamine metabolism, converting fructose-6P into glucosamine-6P using glutamine as a nitrogen source. The chain is Glutamine--fructose-6-phosphate aminotransferase [isomerizing] from Bacillus thuringiensis subsp. konkukian (strain 97-27).